Here is a 160-residue protein sequence, read N- to C-terminus: Putative UPF0479 protein YLR466C-A (160 aa).

Transmembrane regions (helical) follow at residues 39 to 59 (IVFC…KVLQ) and 136 to 156 (VPMI…ISQH).

It belongs to the UPF0479 family.

The protein resides in the membrane. This is Putative UPF0479 protein YLR466C-A from Saccharomyces cerevisiae (strain ATCC 204508 / S288c) (Baker's yeast).